The sequence spans 88 residues: ATP synthase subunit c 1 (88 aa).

Helical transmembrane passes span Phe4 to Ile24 and Ile53 to Leu73.

It belongs to the ATPase C chain family. As to quaternary structure, F-type ATPases have 2 components, F(1) - the catalytic core - and F(0) - the membrane proton channel. F(1) has five subunits: alpha(3), beta(3), gamma(1), delta(1), epsilon(1). F(0) has three main subunits: a(1), b(2) and c(10-14). The alpha and beta chains form an alternating ring which encloses part of the gamma chain. F(1) is attached to F(0) by a central stalk formed by the gamma and epsilon chains, while a peripheral stalk is formed by the delta and b chains.

It is found in the cell inner membrane. In terms of biological role, f(1)F(0) ATP synthase produces ATP from ADP in the presence of a proton or sodium gradient. F-type ATPases consist of two structural domains, F(1) containing the extramembraneous catalytic core and F(0) containing the membrane proton channel, linked together by a central stalk and a peripheral stalk. During catalysis, ATP synthesis in the catalytic domain of F(1) is coupled via a rotary mechanism of the central stalk subunits to proton translocation. Its function is as follows. Key component of the F(0) channel; it plays a direct role in translocation across the membrane. A homomeric c-ring of between 10-14 subunits forms the central stalk rotor element with the F(1) delta and epsilon subunits. This Syntrophotalea carbinolica (strain DSM 2380 / NBRC 103641 / GraBd1) (Pelobacter carbinolicus) protein is ATP synthase subunit c 1.